The following is a 362-amino-acid chain: Uracil-DNA glycosylase (362 aa).

A disordered region spans residues 28–97; sequence ASVAPNDPTE…AGPTEDPNFA (70 aa). Catalysis depends on aspartate 205, which acts as the Proton acceptor.

Belongs to the uracil-DNA glycosylase (UDG) superfamily. UNG family.

The protein resides in the host nucleus. It carries out the reaction Hydrolyzes single-stranded DNA or mismatched double-stranded DNA and polynucleotides, releasing free uracil.. Its function is as follows. Excises uracil residues from the DNA which can arise as a result of misincorporation of dUMP residues by DNA polymerase or deamination of cytosines. Therefore may reduce deleterious uracil incorporation into the viral genome, particularly in terminally differentiated cells which lack DNA repair enzymes. In Psittacid herpesvirus 1 (isolate Amazon parrot/-/97-0001/1997) (PsHV-1), this protein is Uracil-DNA glycosylase (UL2).